The sequence spans 231 residues: MKRGKKYQESVKLVDKTKLYDPVEAMELVQKTAKAKFDETVEAHIRLGVDSRHADQQVRGAVVLPHGTGKKVRVLVFAKGEKATEAEKAGADYVGAEELVSKIQNENWFEFDVVVATPDMMGVVGRLGKVLGPKGLMPNPKAGTVTMDVAKAIADIKAGKIEYRLDKTNIIHCPIGKVSFGTEKLVDNFRTLMSAIIKAKPAAAKGQYLKSVVVTSTMGPGIKVNPLRVSE.

This sequence belongs to the universal ribosomal protein uL1 family. In terms of assembly, part of the 50S ribosomal subunit.

Binds directly to 23S rRNA. The L1 stalk is quite mobile in the ribosome, and is involved in E site tRNA release. Its function is as follows. Protein L1 is also a translational repressor protein, it controls the translation of the L11 operon by binding to its mRNA. In Acetivibrio thermocellus (strain ATCC 27405 / DSM 1237 / JCM 9322 / NBRC 103400 / NCIMB 10682 / NRRL B-4536 / VPI 7372) (Clostridium thermocellum), this protein is Large ribosomal subunit protein uL1.